Consider the following 660-residue polypeptide: Peroxisomal acyl-coenzyme A oxidase 1 (660 aa).

S26 bears the Phosphoserine mark. Residue K65 is modified to N6-acetyllysine. An N6-succinyllysine mark is found at K89 and K90. FAD is bound by residues T139 and G178. At K216 the chain carries N6-acetyllysine. K241 bears the N6-succinyllysine mark. K255, K267, and K272 each carry N6-acetyllysine. K349 bears the N6-succinyllysine mark. E421 serves as the catalytic Proton acceptor. N6-acetyllysine; alternate occurs at positions 437 and 446. Residues K437 and K446 each carry the N6-succinyllysine; alternate modification. An N6-acetyllysine modification is found at K500. K512 is modified (N6-acetyllysine; alternate). K512 bears the N6-succinyllysine; alternate mark. The residue at position 542 (K542) is an N6-succinyllysine. K637 is subject to N6-acetyllysine; alternate. K637 carries the post-translational modification N6-succinyllysine; alternate. Residue K643 is modified to N6-succinyllysine. The residue at position 649 (S649) is a Phosphoserine. K651 carries the N6-acetyllysine modification. K654 carries the post-translational modification N6-succinyllysine. The Microbody targeting signal signature appears at 658–660; it reads SKL.

Belongs to the acyl-CoA oxidase family. As to quaternary structure, homodimer. Interacts with LONP2. It depends on FAD as a cofactor.

It is found in the peroxisome. The enzyme catalyses a 2,3-saturated acyl-CoA + O2 = a (2E)-enoyl-CoA + H2O2. It catalyses the reaction hexadecanoyl-CoA + O2 = (2E)-hexadecenoyl-CoA + H2O2. It carries out the reaction dodecanoyl-CoA + O2 = (2E)-dodecenoyl-CoA + H2O2. The catalysed reaction is octanoyl-CoA + O2 = (2E)-octenoyl-CoA + H2O2. The enzyme catalyses decanoyl-CoA + O2 = (2E)-decenoyl-CoA + H2O2. It catalyses the reaction tetradecanoyl-CoA + O2 = (2E)-tetradecenoyl-CoA + H2O2. It carries out the reaction hexadecanedioyl-CoA + O2 = (2E)-hexadecenedioyl-CoA + H2O2. The catalysed reaction is tetracosanoyl-CoA + O2 = (2E)-tetracosenoyl-CoA + H2O2. The enzyme catalyses glutaryl-CoA + O2 = (2E)-glutaconyl-CoA + H2O2. It catalyses the reaction hexanoyl-CoA + O2 = (2E)-hexenoyl-CoA + H2O2. It carries out the reaction octadecanoyl-CoA + O2 = (2E)-octadecenoyl-CoA + H2O2. The catalysed reaction is (5Z,8Z,11Z,14Z,17Z)-eicosapentaenoyl-CoA + O2 = (2E,5Z,8Z,11Z,14Z,17Z)-icosahexaenoyl-CoA + H2O2. The enzyme catalyses (6Z,9Z,12Z,15Z,18Z,21Z)-tetracosahexaenoyl-CoA + O2 = (2E,6Z,9Z,12Z,15Z,18Z,21Z)-tetracosaheptaenoyl-CoA + H2O2. It participates in lipid metabolism; peroxisomal fatty acid beta-oxidation. In terms of biological role, involved in the initial and rate-limiting step of peroxisomal beta-oxidation of straight-chain saturated and unsaturated very-long-chain fatty acids. Catalyzes the desaturation of fatty acyl-CoAs such as palmitoyl-CoA (hexadecanoyl-CoA) to 2-trans-enoyl-CoAs ((2E)-enoyl-CoAs) such as (2E)-hexadecenoyl-CoA, and donates electrons directly to molecular oxygen (O(2)), thereby producing hydrogen peroxide (H(2)O(2)). The polypeptide is Peroxisomal acyl-coenzyme A oxidase 1 (Bos taurus (Bovine)).